The following is a 140-amino-acid chain: RxLR effector protein Avh23 (140 aa).

An N-terminal signal peptide occupies residues 1 to 21 (MRLTYFLTVIVVATLHAGGTA). Residues 54–72 (RMLRKVKEDTVSKKDHEER) carry the RxLR-dEER motif. Residues 100 to 113 (QGAFQRQNAFVNRD) form an ADA2-binding IR1 repeat. The ADA2-binding IR2 repeat unit spans residues 114–127 (QGAFQRQNAFVKRA).

Belongs to the RxLR effector family. As to quaternary structure, interacts with host histone acetyl transferase SAGA complex subunit ADA2.

It localises to the secreted. It is found in the host nucleus. The protein resides in the host cytoplasm. Its function is as follows. Effector that suppresses plant defense responses during the early stages of pathogen infection. Suppresses cell death induced by effectors and PAMPs in plant hosts. Acts as a modulator of histone acetyltransferase (HAT) in plants. Avh23 binds to the ADA2 subunit of the HAT complex SAGA and disrupts its assembly by interfering with the association of ADA2 with the catalytic subunit GCN5. As such, Avh23 suppresses H3K9 acetylation mediated by the ADA2/GCN5 module and increases plant susceptibility. The protein is RxLR effector protein Avh23 of Phytophthora sojae (Soybean stem and root rot agent).